The chain runs to 206 residues: Large ribosomal subunit protein uL4 (206 aa).

The protein belongs to the universal ribosomal protein uL4 family. Part of the 50S ribosomal subunit.

Its function is as follows. One of the primary rRNA binding proteins, this protein initially binds near the 5'-end of the 23S rRNA. It is important during the early stages of 50S assembly. It makes multiple contacts with different domains of the 23S rRNA in the assembled 50S subunit and ribosome. Functionally, forms part of the polypeptide exit tunnel. This Methylorubrum populi (strain ATCC BAA-705 / NCIMB 13946 / BJ001) (Methylobacterium populi) protein is Large ribosomal subunit protein uL4.